The primary structure comprises 318 residues: tRNA U34 carboxymethyltransferase (318 aa).

The carboxy-S-adenosyl-L-methionine site is built by lysine 88, tryptophan 102, lysine 107, glycine 126, methionine 192, tyrosine 196, and arginine 311.

Belongs to the class I-like SAM-binding methyltransferase superfamily. CmoB family. In terms of assembly, homotetramer.

The enzyme catalyses carboxy-S-adenosyl-L-methionine + 5-hydroxyuridine(34) in tRNA = 5-carboxymethoxyuridine(34) in tRNA + S-adenosyl-L-homocysteine + H(+). Its function is as follows. Catalyzes carboxymethyl transfer from carboxy-S-adenosyl-L-methionine (Cx-SAM) to 5-hydroxyuridine (ho5U) to form 5-carboxymethoxyuridine (cmo5U) at position 34 in tRNAs. In Pseudomonas fluorescens (strain Pf0-1), this protein is tRNA U34 carboxymethyltransferase.